Consider the following 401-residue polypeptide: MNISEGTVSVSRLVYLLKEVVEDNFVQVLVTGEIANFSAPSSGHYYFAVKDDQAQLRGVMFRSSNRLLKFTPENGMQVLCGGRVSLYPQRGELQLVVDRMEPLGVGSWQLAFEKLKTKLDAEGLFEVGRKRRLPSFPRTIGVVTSPTGAAIHDILNVLRRRGAGLHVLLSPVRVQGDGAADEIARAIADFNRHGQADVLIVGRGGGSPEDLWAFNEEVVARAVFASRIPVISAVGHEVDVTISDLVADLRAPTPSAAAELVVQGRQELERHVDHLVMRLSGQMQGRLSLLKERLDGLRRRLRSPVDDLRRQYRDLEQLRKRLFSAMEKTMQRAANRLGLAGSRLHALSPLATLDRGYAIVFSAKTSTIVRDARTLTPGDRVQIRFAKGSVEATVDEVDHGD.

Belongs to the XseA family. In terms of assembly, heterooligomer composed of large and small subunits.

The protein localises to the cytoplasm. The enzyme catalyses Exonucleolytic cleavage in either 5'- to 3'- or 3'- to 5'-direction to yield nucleoside 5'-phosphates.. Bidirectionally degrades single-stranded DNA into large acid-insoluble oligonucleotides, which are then degraded further into small acid-soluble oligonucleotides. The chain is Exodeoxyribonuclease 7 large subunit from Syntrophotalea carbinolica (strain DSM 2380 / NBRC 103641 / GraBd1) (Pelobacter carbinolicus).